Consider the following 274-residue polypeptide: Orotidine 5'-phosphate decarboxylase (274 aa).

Lysine 96 (proton donor) is an active-site residue.

The protein belongs to the OMP decarboxylase family. Type 2 subfamily.

The enzyme catalyses orotidine 5'-phosphate + H(+) = UMP + CO2. The protein operates within pyrimidine metabolism; UMP biosynthesis via de novo pathway; UMP from orotate: step 2/2. The sequence is that of Orotidine 5'-phosphate decarboxylase from Bacteroides fragilis (strain YCH46).